A 189-amino-acid polypeptide reads, in one-letter code: 3-isopropylmalate dehydratase small subunit (189 aa).

Belongs to the LeuD family. LeuD type 1 subfamily. In terms of assembly, heterodimer of LeuC and LeuD.

It carries out the reaction (2R,3S)-3-isopropylmalate = (2S)-2-isopropylmalate. It functions in the pathway amino-acid biosynthesis; L-leucine biosynthesis; L-leucine from 3-methyl-2-oxobutanoate: step 2/4. Its function is as follows. Catalyzes the isomerization between 2-isopropylmalate and 3-isopropylmalate, via the formation of 2-isopropylmaleate. The sequence is that of 3-isopropylmalate dehydratase small subunit from Staphylococcus epidermidis (strain ATCC 35984 / DSM 28319 / BCRC 17069 / CCUG 31568 / BM 3577 / RP62A).